The following is a 335-amino-acid chain: Cytoskeleton protein RodZ (335 aa).

Over 1–111 (MNTEATHDQN…LGKRRKKRDG (111 aa)) the chain is Cytoplasmic. The HTH cro/C1-type domain maps to 19–71 (LRNAREQLGLSQQAVAERLCLKVSTVRDIEEDKAPADLASTFLRGYIRSYARL). The segment at residues 30 to 49 (QQAVAERLCLKVSTVRDIEE) is a DNA-binding region (H-T-H motif). Residues 112-132 (WLMTFTWLVLFVVIGLSGAWW) traverse the membrane as a helical; Signal-anchor for type II membrane protein segment. Residues 133-335 (WQDHKAQQEE…TLNAEQSPAQ (203 aa)) lie on the Periplasmic side of the membrane. Polar residues predominate over residues 148–164 (DQSSAELNNNQSQSVPL). The segment at 148-244 (DQSSAELNNN…PLPTDQAGVT (97 aa)) is disordered. 2 stretches are compositionally biased toward low complexity: residues 165-205 (DTST…DPQQ) and 217-239 (DTAATPAPAATTTPDGAAPLPTD).

This sequence belongs to the RodZ family.

It localises to the cell inner membrane. Cytoskeletal protein that is involved in cell-shape control through regulation of the length of the long axis. This chain is Cytoskeleton protein RodZ, found in Escherichia coli O6:H1 (strain CFT073 / ATCC 700928 / UPEC).